Reading from the N-terminus, the 101-residue chain is Small ribosomal subunit protein uS14 (101 aa).

This sequence belongs to the universal ribosomal protein uS14 family. Part of the 30S ribosomal subunit. Contacts proteins S3 and S10.

Binds 16S rRNA, required for the assembly of 30S particles and may also be responsible for determining the conformation of the 16S rRNA at the A site. The sequence is that of Small ribosomal subunit protein uS14 from Gluconobacter oxydans (strain 621H) (Gluconobacter suboxydans).